The primary structure comprises 507 residues: ESX-5 secretion system ATPase EccB5 (507 aa).

The chain crosses the membrane as a helical span at residues valine 56 to isoleucine 76.

It belongs to the EccB family. In terms of assembly, part of the ESX-5 / type VII secretion system (T7SS), which is composed of cytosolic and membrane components. The ESX-5 membrane complex is composed of EccB5, EccC5, EccD5 and EccE5.

It localises to the cell inner membrane. Its function is as follows. An ATPase. Part of the ESX-5 specialized secretion system, which is responsible for the secretion of EsxN and a number of PE_PGRS and PPE proteins. The polypeptide is ESX-5 secretion system ATPase EccB5 (Mycobacterium marinum (strain ATCC BAA-535 / M)).